Consider the following 107-residue polypeptide: Universal stress protein B homolog (107 aa).

2 helical membrane-spanning segments follow: residues 6-23 (TILF…ARYF) and 89-106 (LFIL…SSFI).

It belongs to the universal stress protein B family.

The protein resides in the cell inner membrane. The chain is Universal stress protein B homolog from Vibrio atlanticus (strain LGP32) (Vibrio splendidus (strain Mel32)).